The chain runs to 480 residues: Proline--tRNA ligase (480 aa).

This sequence belongs to the class-II aminoacyl-tRNA synthetase family. ProS type 3 subfamily. As to quaternary structure, homodimer.

It is found in the cytoplasm. The enzyme catalyses tRNA(Pro) + L-proline + ATP = L-prolyl-tRNA(Pro) + AMP + diphosphate. In terms of biological role, catalyzes the attachment of proline to tRNA(Pro) in a two-step reaction: proline is first activated by ATP to form Pro-AMP and then transferred to the acceptor end of tRNA(Pro). In Pyrococcus abyssi (strain GE5 / Orsay), this protein is Proline--tRNA ligase.